Consider the following 436-residue polypeptide: Enolase (436 aa).

Gln-167 serves as a coordination point for (2R)-2-phosphoglycerate. Glu-209 functions as the Proton donor in the catalytic mechanism. Residues Asp-246, Glu-291, and Asp-318 each contribute to the Mg(2+) site. 4 residues coordinate (2R)-2-phosphoglycerate: Lys-343, Arg-372, Ser-373, and Lys-394. Lys-343 functions as the Proton acceptor in the catalytic mechanism.

It belongs to the enolase family. In terms of assembly, component of the RNA degradosome, a multiprotein complex involved in RNA processing and mRNA degradation. Mg(2+) serves as cofactor.

It localises to the cytoplasm. It is found in the secreted. The protein localises to the cell surface. It carries out the reaction (2R)-2-phosphoglycerate = phosphoenolpyruvate + H2O. The protein operates within carbohydrate degradation; glycolysis; pyruvate from D-glyceraldehyde 3-phosphate: step 4/5. Its function is as follows. Catalyzes the reversible conversion of 2-phosphoglycerate (2-PG) into phosphoenolpyruvate (PEP). It is essential for the degradation of carbohydrates via glycolysis. The protein is Enolase of Actinobacillus pleuropneumoniae serotype 3 (strain JL03).